The following is a 104-amino-acid chain: Large ribosomal subunit protein bL21c (104 aa).

The protein belongs to the bacterial ribosomal protein bL21 family. As to quaternary structure, part of the 50S ribosomal subunit.

The protein resides in the plastid. Its subcellular location is the chloroplast. Its function is as follows. This protein binds to 23S rRNA. The chain is Large ribosomal subunit protein bL21c from Porphyra purpurea (Red seaweed).